The following is a 187-amino-acid chain: Segregation and condensation protein B (187 aa).

This sequence belongs to the ScpB family. As to quaternary structure, homodimer. Homodimerization may be required to stabilize the binding of ScpA to the Smc head domains. Component of a cohesin-like complex composed of ScpA, ScpB and the Smc homodimer, in which ScpA and ScpB bind to the head domain of Smc. The presence of the three proteins is required for the association of the complex with DNA.

It localises to the cytoplasm. Participates in chromosomal partition during cell division. May act via the formation of a condensin-like complex containing Smc and ScpA that pull DNA away from mid-cell into both cell halves. This is Segregation and condensation protein B from Agathobacter rectalis (strain ATCC 33656 / DSM 3377 / JCM 17463 / KCTC 5835 / VPI 0990) (Eubacterium rectale).